Here is a 637-residue protein sequence, read N- to C-terminus: Formate--tetrahydrofolate ligase (637 aa).

Residue 81 to 88 (TPLGEGKS) participates in ATP binding.

This sequence belongs to the formate--tetrahydrofolate ligase family. Homodimer.

The enzyme catalyses (6S)-5,6,7,8-tetrahydrofolate + formate + ATP = (6R)-10-formyltetrahydrofolate + ADP + phosphate. Its pathway is one-carbon metabolism; tetrahydrofolate interconversion. The chain is Formate--tetrahydrofolate ligase from Spinacia oleracea (Spinach).